The following is a 948-amino-acid chain: UvrABC system protein A (948 aa).

33–40 provides a ligand contact to ATP; it reads GLSGSGKS. The segment at 252-279 adopts a C4-type zinc-finger fold; that stretch reads CPICGFSIGELEPRMFSFNSPFGACPTC. ABC transporter domains lie at 309–587 and 607–935; these read WIPT…KKSL and ASDR…KYLK. Position 639 to 646 (639 to 646) interacts with ATP; the sequence is GVSGSGKS. The C4-type zinc finger occupies 738–764; sequence CEACKGDGIIKIEMHFLPDVYVPCEVC.

This sequence belongs to the ABC transporter superfamily. UvrA family. Forms a heterotetramer with UvrB during the search for lesions.

The protein resides in the cytoplasm. In terms of biological role, the UvrABC repair system catalyzes the recognition and processing of DNA lesions. UvrA is an ATPase and a DNA-binding protein. A damage recognition complex composed of 2 UvrA and 2 UvrB subunits scans DNA for abnormalities. When the presence of a lesion has been verified by UvrB, the UvrA molecules dissociate. The sequence is that of UvrABC system protein A from Staphylococcus aureus (strain MSSA476).